A 76-amino-acid chain; its full sequence is Small ribosomal subunit protein bS18 (76 aa).

This sequence belongs to the bacterial ribosomal protein bS18 family. As to quaternary structure, part of the 30S ribosomal subunit. Forms a tight heterodimer with protein bS6.

Functionally, binds as a heterodimer with protein bS6 to the central domain of the 16S rRNA, where it helps stabilize the platform of the 30S subunit. The protein is Small ribosomal subunit protein bS18 of Pseudomonas fluorescens (strain ATCC BAA-477 / NRRL B-23932 / Pf-5).